Consider the following 463-residue polypeptide: Phosphomannomutase/phosphoglucomutase (463 aa).

Tyrosine 17 serves as a coordination point for alpha-D-glucose 1-phosphate. An alpha-D-mannose 1-phosphate-binding site is contributed by tyrosine 17. The Non-phosphorylated intermediate role is filled by serine 108. Residues serine 108, aspartate 242, aspartate 244, and aspartate 246 each contribute to the Mg(2+) site. Serine 108 bears the Phosphoserine mark. Alpha-D-glucose 1-phosphate is bound by residues lysine 285, histidine 308, 325–329 (EMSGH), and 421–425 (RASNT). Alpha-D-mannose 1-phosphate contacts are provided by residues histidine 308, 325 to 329 (EMSGH), and 421 to 425 (RASNT).

Belongs to the phosphohexose mutase family. In terms of assembly, monomer. The cofactor is Mg(2+).

The enzyme catalyses alpha-D-mannose 1-phosphate = D-mannose 6-phosphate. The catalysed reaction is alpha-D-glucose 1-phosphate = alpha-D-glucose 6-phosphate. The protein operates within nucleotide-sugar biosynthesis; GDP-alpha-D-mannose biosynthesis; alpha-D-mannose 1-phosphate from D-fructose 6-phosphate: step 2/2. It participates in bacterial outer membrane biogenesis; lipopolysaccharide biosynthesis. Highly reversible phosphoryltransferase. The phosphomannomutase activity produces a precursor for alginate polymerization, the alginate layer causes a mucoid phenotype and provides a protective barrier against host immune defenses and antibiotics. Also involved in core lipopolysaccaride (LPS) biosynthesis due to its phosphoglucomutase activity. Essential for rhamnolipid production, an exoproduct correlated with pathogenicity. Required for biofilm production. The reaction proceeds via 2 processive phosphoryl transferase reactions; first from enzyme-phospho-Ser-108 to the substrate (generating a bisphosphorylated substrate intermediate and a dephosphorylated enzyme), a 180 degree rotation of the intermediate (probably aided by movement of domain 4), and subsequent transfer of phosphate back to the enzyme. This is Phosphomannomutase/phosphoglucomutase (algC) from Pseudomonas aeruginosa (strain UCBPP-PA14).